The chain runs to 282 residues: tRNA (guanine-N(7)-)-methyltransferase (282 aa).

A disordered region spans residues 1–29; the sequence is MPHAPAKRQKREEYKNALHEDESNAALPK. A compositionally biased stretch (basic and acidic residues) spans 10 to 22; the sequence is KREEYKNALHEDE. S-adenosyl-L-methionine contacts are provided by residues G104, 153-154, and C173; that span reads NT. Residue D176 is part of the active site. 255–257 serves as a coordination point for S-adenosyl-L-methionine; sequence TEE.

This sequence belongs to the class I-like SAM-binding methyltransferase superfamily. TrmB family. Forms a complex with TRM82.

It is found in the nucleus. The catalysed reaction is guanosine(46) in tRNA + S-adenosyl-L-methionine = N(7)-methylguanosine(46) in tRNA + S-adenosyl-L-homocysteine. It functions in the pathway tRNA modification; N(7)-methylguanine-tRNA biosynthesis. Functionally, catalyzes the formation of N(7)-methylguanine at position 46 (m7G46) in tRNA. In Phaeosphaeria nodorum (strain SN15 / ATCC MYA-4574 / FGSC 10173) (Glume blotch fungus), this protein is tRNA (guanine-N(7)-)-methyltransferase.